The sequence spans 250 residues: Indole-3-glycerol phosphate synthase (250 aa).

Belongs to the TrpC family.

The enzyme catalyses 1-(2-carboxyphenylamino)-1-deoxy-D-ribulose 5-phosphate + H(+) = (1S,2R)-1-C-(indol-3-yl)glycerol 3-phosphate + CO2 + H2O. Its pathway is amino-acid biosynthesis; L-tryptophan biosynthesis; L-tryptophan from chorismate: step 4/5. The protein is Indole-3-glycerol phosphate synthase of Bacillus velezensis (strain DSM 23117 / BGSC 10A6 / LMG 26770 / FZB42) (Bacillus amyloliquefaciens subsp. plantarum).